The primary structure comprises 670 residues: Zinc finger protein 233 (670 aa).

One can recognise a KRAB domain in the interval 8–79; the sequence is VTFKDVAVVF…ETEIQGDGCS (72 aa). A C2H2-type 1; degenerate zinc finger spans residues 258 to 280; the sequence is QTSDENGKGLSVGSNLELHQQLH. The C2H2-type 2; degenerate zinc finger occupies 311–336; that stretch reads EKCYRNGDSGEGFSQGSHLQPHQRVS. Residues 342–364 form a C2H2-type 3; degenerate zinc finger; that stretch reads YRCQVYARSSNQNSCLPSHELTH. The C2H2-type 4; degenerate zinc finger occupies 370–392; sequence CTCGRCGKGFHHSLDFDIHCVDS. The segment at 398–420 adopts a C2H2-type 5; degenerate zinc-finger fold; the sequence is CKCDVYDKGFSQTSQLQAHQRGH. C2H2-type zinc fingers lie at residues 452–474, 480–502, 508–530, 536–558, 564–586, 592–614, and 620–642; these read YKCE…QRIH, YKCD…QRVH, YKCE…QQVH, and YKCG…QRVH.

It belongs to the krueppel C2H2-type zinc-finger protein family.

It is found in the nucleus. Its function is as follows. May be involved in transcriptional regulation. The polypeptide is Zinc finger protein 233 (ZNF233) (Homo sapiens (Human)).